Consider the following 546-residue polypeptide: Beta-amylase (546 aa).

Residues 1–30 (MKNQFQYCCIVILSVVMLFVSLLIPQASSA) form the signal peptide. Aspartate 79 is a substrate binding site. Residues glutamate 86, aspartate 90, and glutamine 91 each contribute to the Ca(2+) site. Substrate contacts are provided by histidine 119 and aspartate 127. Cysteine 121 and cysteine 129 are oxidised to a cystine. Positions 171 and 174 each coordinate Ca(2+). Catalysis depends on glutamate 202, which acts as the Proton donor. Substrate-binding residues include lysine 317, histidine 322, and threonine 360. Glutamate 397 (proton acceptor) is an active-site residue. Substrate contacts are provided by residues 398–399 (NA) and arginine 427. The CBM20 domain maps to 444–546 (LLGVTPVMQT…LKTTSHTSSW (103 aa)).

This sequence belongs to the glycosyl hydrolase 14 family. Monomer. Ca(2+) serves as cofactor.

The enzyme catalyses Hydrolysis of (1-&gt;4)-alpha-D-glucosidic linkages in polysaccharides so as to remove successive maltose units from the non-reducing ends of the chains.. This Bacillus cereus protein is Beta-amylase (spoII).